The following is a 127-amino-acid chain: Large ribosomal subunit protein uL22 (127 aa).

Positions 106-117 are enriched in low complexity; sequence GAPEGVPVGGAV. The segment at 106–127 is disordered; that stretch reads GAPEGVPVGGAVDTPGDEEEEE.

The protein belongs to the universal ribosomal protein uL22 family. As to quaternary structure, part of the 50S ribosomal subunit.

Functionally, this protein binds specifically to 23S rRNA; its binding is stimulated by other ribosomal proteins, e.g. L4, L17, and L20. It is important during the early stages of 50S assembly. It makes multiple contacts with different domains of the 23S rRNA in the assembled 50S subunit and ribosome. Its function is as follows. The globular domain of the protein is located near the polypeptide exit tunnel on the outside of the subunit, while an extended beta-hairpin is found that lines the wall of the exit tunnel in the center of the 70S ribosome. The protein is Large ribosomal subunit protein uL22 of Rubrobacter xylanophilus (strain DSM 9941 / JCM 11954 / NBRC 16129 / PRD-1).